The sequence spans 617 residues: 1-deoxy-D-xylulose-5-phosphate synthase (617 aa).

Thiamine diphosphate-binding positions include histidine 77 and 118–120; that span reads GHS. Residue aspartate 149 participates in Mg(2+) binding. Thiamine diphosphate is bound by residues 150 to 151, asparagine 178, tyrosine 287, and glutamate 368; that span reads GA. Position 178 (asparagine 178) interacts with Mg(2+).

Belongs to the transketolase family. DXPS subfamily. As to quaternary structure, homodimer. Mg(2+) is required as a cofactor. Requires thiamine diphosphate as cofactor.

It carries out the reaction D-glyceraldehyde 3-phosphate + pyruvate + H(+) = 1-deoxy-D-xylulose 5-phosphate + CO2. The protein operates within metabolic intermediate biosynthesis; 1-deoxy-D-xylulose 5-phosphate biosynthesis; 1-deoxy-D-xylulose 5-phosphate from D-glyceraldehyde 3-phosphate and pyruvate: step 1/1. In terms of biological role, catalyzes the acyloin condensation reaction between C atoms 2 and 3 of pyruvate and glyceraldehyde 3-phosphate to yield 1-deoxy-D-xylulose-5-phosphate (DXP). This chain is 1-deoxy-D-xylulose-5-phosphate synthase, found in Haemophilus ducreyi (strain 35000HP / ATCC 700724).